The primary structure comprises 163 residues: Large ribosomal subunit protein uL15 (163 aa).

It belongs to the universal ribosomal protein uL15 family. Part of the 50S ribosomal subunit.

Functionally, binds to the 23S rRNA. In Orientia tsutsugamushi (strain Boryong) (Rickettsia tsutsugamushi), this protein is Large ribosomal subunit protein uL15.